The following is a 259-amino-acid chain: uncharacterized protein (259 aa).

The a divalent metal cation site is built by histidine 9, histidine 11, glutamate 97, histidine 133, histidine 157, and aspartate 207.

The protein belongs to the metallo-dependent hydrolases superfamily. TatD-type hydrolase family. The cofactor is a divalent metal cation.

This is an uncharacterized protein from Escherichia coli (strain K12).